A 140-amino-acid chain; its full sequence is Sex-regulated protein janus-B (140 aa).

Residue Arg-42 coordinates substrate. Residue His-69 is the Proton acceptor of the active site. 110–112 (SRT) is a substrate binding site.

The protein belongs to the janus family.

Functionally, janA and janB regulate somatic sex differentiation. This chain is Sex-regulated protein janus-B (janB), found in Drosophila simulans (Fruit fly).